A 329-amino-acid chain; its full sequence is MATIHFTKVHGSQNDFFLVDEEGNQIMDWSDAKRADFAIKLCDREHSLGGADGILYVTKSSEAGPIGQMRVVNSDGSIASMCGNGLRTVARYLLEKHALTEAKVETMKAILDVKKATSLGFDIPTYQVEISPVKFNAESLPMNVGVEKLFNQVVPELDAELAFSAVSVPNPHLITFVDQTVLDSDRQETLASYLNSENPYFPDGVNVSFVKRLSDDAIYVRTFERGVGFTNACGTAMSACSLIKKMLDKDTFETPLNVYNDGGRVQVTAKKDEAGDISLQLIGNATFVSTGSVSYESDTVTELTNEATPEQAQYQELVKEVKEFLKTTE.

2 residues coordinate substrate: Asn14 and Asn73. The Proton donor role is filled by Cys82. Substrate contacts are provided by residues 83–84, Asn170, Asn206, and 224–225; these read GN and ER. The Proton acceptor role is filled by Cys233. Residue 234–235 coordinates substrate; it reads GT.

This sequence belongs to the diaminopimelate epimerase family. Homodimer.

Its subcellular location is the cytoplasm. It carries out the reaction (2S,6S)-2,6-diaminopimelate = meso-2,6-diaminopimelate. It participates in amino-acid biosynthesis; L-lysine biosynthesis via DAP pathway; DL-2,6-diaminopimelate from LL-2,6-diaminopimelate: step 1/1. Its function is as follows. Catalyzes the stereoinversion of LL-2,6-diaminopimelate (L,L-DAP) to meso-diaminopimelate (meso-DAP), a precursor of L-lysine and an essential component of the bacterial peptidoglycan. The sequence is that of Diaminopimelate epimerase from Listeria monocytogenes serovar 1/2a (strain ATCC BAA-679 / EGD-e).